A 577-amino-acid polypeptide reads, in one-letter code: Protein hinderin (577 aa).

A Phosphoserine modification is found at S21. Positions 91 to 167 (LKDLCLEDKR…CQELLSLYQK (77 aa)) form a coiled coil. S179 bears the Phosphoserine mark. Residues 251–282 (TLHHPKDDLDKIPSETTTCNCESPGRKPAVPT) are disordered. Residues 254–263 (HPKDDLDKIP) are compositionally biased toward basic and acidic residues. Residues 358–402 (LKKQISEDRKQQLMLQKMELEIEKERLQHLLAQQETKLLLKQQQL) adopt a coiled-coil conformation. Disordered stretches follow at residues 425–444 (SSSIKKHQDPPNSGENRKER), 449–492 (FHSH…GSLK), and 520–540 (LSPNSAPKPQRYPSREAGAWN). Over residues 449–468 (FHSHMKDDAQWSCQKKDTCR) the composition is skewed to basic and acidic residues. Residues S490 and S521 each carry the phosphoserine modification.

As to quaternary structure, interacts (via N- and C-terminal domains) with SMC3 (via central hinge region). In terms of tissue distribution, widely expressed.

In terms of biological role, competes with SMC1 for binding to SMC3. May affect the availability of SMC3 to engage in the formation of multimeric protein complexes. In Homo sapiens (Human), this protein is Protein hinderin (KIAA1328).